A 610-amino-acid chain; its full sequence is ATP-dependent RNA helicase HAS1 (610 aa).

Disordered regions lie at residues 1–81 (MTAA…AELK) and 112–131 (ALAV…DDPT). Basic residues predominate over residues 9-18 (KKRKRKHKAK). The segment covering 51–76 (PEVEDVVADASENDVESGAEEDEEQV) has biased composition (acidic residues). Residues 131–159 (TRFDELNLSERTMEAIKTMGFESMTEIQR) carry the Q motif motif. Positions 162 to 337 (IPPLLSGKDV…RISLKAGPLY (176 aa)) constitute a Helicase ATP-binding domain. ATP is bound at residue 175–182 (AKTGSGKT). Residues 285-288 (DEAD) carry the DEAD box motif. A Helicase C-terminal domain is found at 351-521 (GLEQGYVICD…NIQSQLEALI (171 aa)). Over residues 584 to 594 (DKKVEGRREYG) the composition is skewed to basic and acidic residues. The segment at 584–610 (DKKVEGRREYGRQPQQGRRPMKPNKRF) is disordered.

It belongs to the DEAD box helicase family. DDX18/HAS1 subfamily. Associates in the nucleolus with the 60S and pre-60S ribosomal subunits.

The protein localises to the nucleus. Its subcellular location is the nucleolus. It carries out the reaction ATP + H2O = ADP + phosphate + H(+). Its function is as follows. ATP-dependent RNA helicase involved in 40S ribosomal subunit biogenesis. Required for the processing and cleavage of 35S pre-rRNA at sites A0, A1, and A2, leading to mature 18S rRNA. This Phaeosphaeria nodorum (strain SN15 / ATCC MYA-4574 / FGSC 10173) (Glume blotch fungus) protein is ATP-dependent RNA helicase HAS1 (HAS1).